The chain runs to 437 residues: GTPase Obg (437 aa).

An Obg domain is found at serine 2–leucine 160. The OBG-type G domain maps to alanine 161–glutamate 338. Residues glycine 167–serine 174, phenylalanine 192–valine 196, aspartate 214–glycine 217, asparagine 284–aspartate 287, and serine 319–isoleucine 321 contribute to the GTP site. Mg(2+) contacts are provided by serine 174 and threonine 194. Positions glycine 359–aspartate 437 constitute an OCT domain.

The protein belongs to the TRAFAC class OBG-HflX-like GTPase superfamily. OBG GTPase family. As to quaternary structure, monomer. Mg(2+) serves as cofactor.

The protein localises to the cytoplasm. Its function is as follows. An essential GTPase which binds GTP, GDP and possibly (p)ppGpp with moderate affinity, with high nucleotide exchange rates and a fairly low GTP hydrolysis rate. Plays a role in control of the cell cycle, stress response, ribosome biogenesis and in those bacteria that undergo differentiation, in morphogenesis control. This is GTPase Obg from Streptococcus suis (strain 98HAH33).